Here is a 385-residue protein sequence, read N- to C-terminus: 1-deoxy-D-xylulose 5-phosphate reductoisomerase (385 aa).

The NADPH site is built by T11, G12, S13, I14, A37, R38, N39, and N123. Position 124 (K124) interacts with 1-deoxy-D-xylulose 5-phosphate. E125 is a binding site for NADPH. D149 serves as a coordination point for Mn(2+). 1-deoxy-D-xylulose 5-phosphate contacts are provided by S150, E151, S173, and H196. E151 is a binding site for Mn(2+). G202 provides a ligand contact to NADPH. 4 residues coordinate 1-deoxy-D-xylulose 5-phosphate: S209, N214, K215, and E218. A Mn(2+)-binding site is contributed by E218.

It belongs to the DXR family. It depends on Mg(2+) as a cofactor. Requires Mn(2+) as cofactor.

It catalyses the reaction 2-C-methyl-D-erythritol 4-phosphate + NADP(+) = 1-deoxy-D-xylulose 5-phosphate + NADPH + H(+). It functions in the pathway isoprenoid biosynthesis; isopentenyl diphosphate biosynthesis via DXP pathway; isopentenyl diphosphate from 1-deoxy-D-xylulose 5-phosphate: step 1/6. Catalyzes the NADPH-dependent rearrangement and reduction of 1-deoxy-D-xylulose-5-phosphate (DXP) to 2-C-methyl-D-erythritol 4-phosphate (MEP). The polypeptide is 1-deoxy-D-xylulose 5-phosphate reductoisomerase (Moorella thermoacetica (strain ATCC 39073 / JCM 9320)).